A 496-amino-acid polypeptide reads, in one-letter code: Cytochrome P450 71D180 (496 aa).

The helical; Signal-anchor for type II membrane protein transmembrane segment at 1-21 (MDISISWVVIIVFVLSYLILM) threads the bilayer. Cys435 is a heme binding site. A disordered region spans residues 471 to 496 (MSETPGLSGPRKNPLIMIPTIHNPTS).

The protein belongs to the cytochrome P450 family. The cofactor is heme.

The protein localises to the membrane. It carries out the reaction gamma-terpinene + 2 reduced [NADPH--hemoprotein reductase] + 2 O2 = carvacrol + 2 oxidized [NADPH--hemoprotein reductase] + 3 H2O + 2 H(+). The catalysed reaction is (4S)-limonene + reduced [NADPH--hemoprotein reductase] + O2 = (1S,5R)-carveol + oxidized [NADPH--hemoprotein reductase] + H2O + H(+). It catalyses the reaction (4R)-limonene + reduced [NADPH--hemoprotein reductase] + O2 = (1R,5S)-carveol + oxidized [NADPH--hemoprotein reductase] + H2O + H(+). Its pathway is secondary metabolite biosynthesis; terpenoid biosynthesis. Functionally, involved in the biosynthesis of phenolic monoterpenes natural products thymol and carvacrol which have a broad range of biological activities acting as antimicrobial compounds, insecticides, antioxidants and pharmaceutical agents. Catalyzes the C2-hydroxylation of gamma-terpinene to produce carvacrol. Mediates also the C6-hydroxylation of (4S)-limonene and (4R)-limonene to form carveol. This Origanum majorana (Sweet marjoram) protein is Cytochrome P450 71D180.